A 57-amino-acid chain; its full sequence is Sperm protamine P1-type (57 aa).

The interval 1–57 (MARYRHNRSRSRSRHRRRRRGHRGGRYRRRRRRGRYGHRRHHRGHSRRRRKRRRSRH) is disordered.

This sequence belongs to the protamine P1 family. As to expression, testis.

It localises to the nucleus. The protein resides in the chromosome. Protamines substitute for histones in the chromatin of sperm during the haploid phase of spermatogenesis. They compact sperm DNA into a highly condensed, stable and inactive complex. The sequence is that of Sperm protamine P1-type from Alligator mississippiensis (American alligator).